The primary structure comprises 357 residues: Phosphoribosylformylglycinamidine cyclo-ligase (357 aa).

The protein belongs to the AIR synthase family.

The protein resides in the cytoplasm. The catalysed reaction is 2-formamido-N(1)-(5-O-phospho-beta-D-ribosyl)acetamidine + ATP = 5-amino-1-(5-phospho-beta-D-ribosyl)imidazole + ADP + phosphate + H(+). It functions in the pathway purine metabolism; IMP biosynthesis via de novo pathway; 5-amino-1-(5-phospho-D-ribosyl)imidazole from N(2)-formyl-N(1)-(5-phospho-D-ribosyl)glycinamide: step 2/2. This is Phosphoribosylformylglycinamidine cyclo-ligase from Rhizobium leguminosarum bv. trifolii (strain WSM2304).